Reading from the N-terminus, the 379-residue chain is MATCPVLQKETLFRTGVHAYRIPALLYLKKQKTLLAFAEKRASKTDEHAELIVLRRGSYNEATNRVKWQPEEVVTQAQLEGHRSMNPCPLYDKQTKTLFLFFIAVPGRVSEHHQLHTKVNVTRLCCVSSTDHGRTWSPIQDLTETTIGSTHQEWATFAVGPGHCLQLRNPAGSLLVPAYAYRKLHPAQKPTPFAFCFISLDHGHTWKLGNFVAENSLECQVAEVGTGAQRMVYLNARSFLGARVQAQSPNDGLDFQDNRVVSKLVEPPHGCHGSVVAFHNPISKPHALDTWLLYTHPTDSRNRTNLGVYLNQMPLDPTAWSEPTLLAMGICAYSDLQNMGQGPDGSPQFGCLYESGNYEEIIFLIFTLKQAFPTVFDAQ.

Residues 20–23 carry the FRIP motif motif; the sequence is YRIP. Positions 21 and 41 each coordinate substrate. Aspartate 46 serves as the catalytic Proton acceptor. One copy of the BNR 1 repeat lies at 127 to 138; that stretch reads VSSTDHGRTWSP. Residues tyrosine 179 and tyrosine 181 each contribute to the substrate site. One copy of the BNR 2 repeat lies at 197-208; sequence FISLDHGHTWKL. The substrate site is built by glutamate 218, arginine 237, and arginine 303. Residue arginine 303 is part of the active site. The active-site Nucleophile is the tyrosine 333. Residue glutamate 354 is part of the active site.

Belongs to the glycosyl hydrolase 33 family. In terms of tissue distribution, highly expressed in heart.

It localises to the cytoplasm. The protein localises to the cytosol. The catalysed reaction is Hydrolysis of alpha-(2-&gt;3)-, alpha-(2-&gt;6)-, alpha-(2-&gt;8)- glycosidic linkages of terminal sialic acid residues in oligosaccharides, glycoproteins, glycolipids, colominic acid and synthetic substrates.. It carries out the reaction a ganglioside GD1a + H2O = a ganglioside GM1 + N-acetylneuraminate. The enzyme catalyses a ganglioside GM1 + H2O = a ganglioside GA1 + N-acetylneuraminate. It catalyses the reaction a ganglioside GT1b + H2O = a ganglioside GD1b + N-acetylneuraminate. The catalysed reaction is a ganglioside GD1b + H2O = a ganglioside GM1 + N-acetylneuraminate. It carries out the reaction a ganglioside GD3 + H2O = a ganglioside GM3 + N-acetylneuraminate. The enzyme catalyses a ganglioside GM3 + H2O = a beta-D-galactosyl-(1-&gt;4)-beta-D-glucosyl-(1&lt;-&gt;1)-ceramide + N-acetylneuraminate. It catalyses the reaction a ganglioside GM2 + H2O = a ganglioside GA2 + N-acetylneuraminate. The catalysed reaction is a neolactoside IV(3)-alpha-NeuAc-nLc4Cer(d18:1(4E)) + H2O = a neolactoside nLc4Cer(d18:1(4E)) + N-acetylneuraminate. It carries out the reaction N-acetyl-alpha-neuraminosyl-(2-&gt;3)-beta-D-galactosyl-(1-&gt;4)-D-glucose + H2O = lactose + N-acetylneuraminate. Functionally, exo-alpha-sialidase that catalyzes the hydrolytic cleavage of the terminal sialic acid (N-acetylneuraminic acid, Neu5Ac) of a glycan moiety in the catabolism of glycolipids, glycoproteins and oligosacharides. Recognizes sialyl linkage positions of the glycan moiety as well as the supramolecular organization of the sialoglycoconjugate. Displays preference for alpha-(2-&gt;3)-sialylated GD1a and GT1B gangliosides over alpha-(2-&gt;8)-sialylated GD1b, in both monomeric forms and micelles. Hydrolyzes exclusively monomeric GM1 ganglioside, but has no activity toward the miscellar form. Has lower sialidase activity for glycoproteins such as fetuin and TF/transferrin that carry a mixture of alpha-(2-&gt;3) and alpha-(2-&gt;6)-sialyl linkages. Cleaves milk oligosaccharide alpha-(2-&gt;3)-sialyllactose, but is inactive toward isomer alpha-(2-&gt;6)-sialyllactose isomer. Has no activity toward colominic acid, a homomer of alpha-(2-&gt;8)-linked Neu5Ac residues. The chain is Sialidase-2 (Neu2) from Mus musculus (Mouse).